The chain runs to 167 residues: Protein-export protein SecB (167 aa).

The protein belongs to the SecB family. As to quaternary structure, homotetramer, a dimer of dimers. One homotetramer interacts with 1 SecA dimer.

The protein localises to the cytoplasm. In terms of biological role, one of the proteins required for the normal export of preproteins out of the cell cytoplasm. It is a molecular chaperone that binds to a subset of precursor proteins, maintaining them in a translocation-competent state. It also specifically binds to its receptor SecA. The chain is Protein-export protein SecB from Cellvibrio japonicus (strain Ueda107) (Pseudomonas fluorescens subsp. cellulosa).